The primary structure comprises 516 residues: L-amino-acid oxidase (516 aa).

The signal sequence occupies residues 1–18 (MNVFFMFSLLFLAALGSC). Residues cysteine 28 and cysteine 189 are joined by a disulfide bond. Residues 61 to 62 (MA), 81 to 82 (EA), arginine 89, and 103 to 106 (GPMR) contribute to the FAD site. Substrate is bound by residues arginine 106 and histidine 239. Valine 279 is an FAD binding site. A disulfide bridge connects residues cysteine 349 and cysteine 430. Asparagine 379 is a glycosylation site (N-linked (GlcNAc...) asparagine). Tyrosine 390 provides a ligand contact to substrate. FAD-binding positions include glutamate 475 and 482–487 (GWIDST). A substrate-binding site is contributed by 482–483 (GW).

This sequence belongs to the flavin monoamine oxidase family. FIG1 subfamily. In terms of assembly, homodimer; non-covalently linked. The cofactor is FAD. Post-translationally, N-glycosylated. As to expression, expressed by the venom gland.

It localises to the secreted. It catalyses the reaction an L-alpha-amino acid + O2 + H2O = a 2-oxocarboxylate + H2O2 + NH4(+). The catalysed reaction is L-leucine + O2 + H2O = 4-methyl-2-oxopentanoate + H2O2 + NH4(+). The enzyme catalyses L-phenylalanine + O2 + H2O = 3-phenylpyruvate + H2O2 + NH4(+). It carries out the reaction L-methionine + O2 + H2O = 4-methylsulfanyl-2-oxobutanoate + H2O2 + NH4(+). It catalyses the reaction L-arginine + O2 + H2O = 5-guanidino-2-oxopentanoate + H2O2 + NH4(+). Catalyzes an oxidative deamination of predominantly hydrophobic and aromatic L-amino acids, thus producing hydrogen peroxide that may contribute to the diverse toxic effects of this enzyme. Is active on L-Arg, L-Phe, L-Met, and L-Leu and is weakly active on L-Val. Exhibits diverse biological activities, such as hemorrhage, hemolysis, edema, apoptosis of vascular endothelial cells or tumor cell lines, antibacterial and antiparasitic activities, as well as regulation of platelet aggregation. Its effect on platelets is controversial, since it either induces aggregation or inhibits agonist-induced aggregation. These different effects are probably due to different experimental conditions. The polypeptide is L-amino-acid oxidase (Crotalus adamanteus (Eastern diamondback rattlesnake)).